The primary structure comprises 513 residues: Histidine ammonia-lyase (513 aa).

Residues 144–146 constitute a cross-link (5-imidazolinone (Ala-Gly)); it reads ASG. Ser-145 bears the 2,3-didehydroalanine (Ser) mark.

Belongs to the PAL/histidase family. In terms of processing, contains an active site 4-methylidene-imidazol-5-one (MIO), which is formed autocatalytically by cyclization and dehydration of residues Ala-Ser-Gly.

It localises to the cytoplasm. It carries out the reaction L-histidine = trans-urocanate + NH4(+). It participates in amino-acid degradation; L-histidine degradation into L-glutamate; N-formimidoyl-L-glutamate from L-histidine: step 1/3. This is Histidine ammonia-lyase from Streptococcus pyogenes serotype M5 (strain Manfredo).